Here is a 445-residue protein sequence, read N- to C-terminus: C-terminal-binding protein 2 (445 aa).

R22 carries the post-translational modification Asymmetric dimethylarginine. NAD(+)-binding positions include S106, 186–191 (IGFGRT), D210, 243–249 (CNLNEHN), 270–272 (AAR), and D296. The active site involves R272. Residue E301 is part of the active site. H321 functions as the Proton donor in the catalytic mechanism. Residue 321–324 (HTAW) coordinates NAD(+). The segment at 414–445 (THNLPTVAHPSQAPSPNQPTKHGDNREHPNEQ) is disordered. Position 428 is a phosphoserine (S428). Positions 434–445 (KHGDNREHPNEQ) are enriched in basic and acidic residues.

It belongs to the D-isomer specific 2-hydroxyacid dehydrogenase family. As to quaternary structure, can form homodimers or heterodimers of CTBP1 and CTBP2. Interacts with HIPK2 and ZNF217. Interacts with PRDM16; represses white adipose tissue (WAT)-specific genes expression. Interacts with PNN, NRIP1 and WIZ. Interacts with MCRIP1. (Microbial infection) Interacts with human adenovirus 5 E1A protein; this interaction seems to potentiate viral replication. As to expression, ubiquitous. Highest levels in heart, skeletal muscle, and pancreas.

It localises to the nucleus. It is found in the synapse. In terms of biological role, corepressor targeting diverse transcription regulators. Functions in brown adipose tissue (BAT) differentiation. Functionally, isoform 2 probably acts as a scaffold for specialized synapses. This chain is C-terminal-binding protein 2 (CTBP2), found in Homo sapiens (Human).